The chain runs to 155 residues: Rhombotin-1 (155 aa).

2 LIM zinc-binding domains span residues 21–83 and 85–147; these read KGCA…LFGT and GNCA…GQLN.

The protein resides in the nucleus. Functionally, may be involved in gene regulation within neural lineage cells potentially by direct DNA binding or by binding to other transcription factors. The chain is Rhombotin-1 from Danio rerio (Zebrafish).